We begin with the raw amino-acid sequence, 456 residues long: Protein disulfide-isomerase TMX3 (456 aa).

An N-terminal signal peptide occupies residues 1–29; the sequence is MANAVGRRSWAALRLCAAVILLDLAVCKG. A Thioredoxin domain is found at 30–131; it reads FVEDLNESFK…KDDIIEFAHR (102 aa). The Lumenal segment spans residues 30 to 378; sequence FVEDLNESFK…TIVSIFKSSP (349 aa). Residue Asn-35 is glycosylated (N-linked (GlcNAc...) asparagine). Active-site nucleophile residues include Cys-56 and Cys-59. Cys-56 and Cys-59 are joined by a disulfide. N-linked (GlcNAc...) asparagine glycans are attached at residues Asn-261 and Asn-316. A helical transmembrane segment spans residues 379 to 399; the sequence is LMGCFLFGLPLGVISIMCYGI. The Cytoplasmic segment spans residues 400-456; it reads YTADTDGGYIEERYEVSKSEMENQEQIEESKEQESSSGGSLAPTVQEPKDVLEKKKD. Positions 416–456 are disordered; sequence SKSEMENQEQIEESKEQESSSGGSLAPTVQEPKDVLEKKKD. Positions 446–456 are enriched in basic and acidic residues; that stretch reads EPKDVLEKKKD. A Di-lysine motif motif is present at residues 453 to 456; sequence KKKD.

Belongs to the protein disulfide isomerase family.

It localises to the endoplasmic reticulum membrane. The catalysed reaction is Catalyzes the rearrangement of -S-S- bonds in proteins.. Probable disulfide isomerase, which participates in the folding of proteins containing disulfide bonds. May act as a dithiol oxidase. Acts as a regulator of endoplasmic reticulum-mitochondria contact sites via its ability to regulate redox signals. The polypeptide is Protein disulfide-isomerase TMX3 (Tmx3) (Mus musculus (Mouse)).